The primary structure comprises 232 residues: Urease accessory protein UreF (232 aa).

Belongs to the UreF family. As to quaternary structure, ureD, UreF and UreG form a complex that acts as a GTP-hydrolysis-dependent molecular chaperone, activating the urease apoprotein by helping to assemble the nickel containing metallocenter of UreC. The UreE protein probably delivers the nickel.

The protein resides in the cytoplasm. Its function is as follows. Required for maturation of urease via the functional incorporation of the urease nickel metallocenter. This chain is Urease accessory protein UreF, found in Azorhizobium caulinodans (strain ATCC 43989 / DSM 5975 / JCM 20966 / LMG 6465 / NBRC 14845 / NCIMB 13405 / ORS 571).